The sequence spans 259 residues: Protein N-terminal and lysine N-methyltransferase efm7 (259 aa).

S-adenosyl-L-methionine contacts are provided by residues W56, 83–85, D105, W139, and A163; that span reads GAA.

This sequence belongs to the class I-like SAM-binding methyltransferase superfamily. EFM7 family.

It is found in the cytoplasm. In terms of biological role, S-adenosyl-L-methionine-dependent protein methyltransferase that trimethylates the N-terminal glycine 'Gly-2' of elongation factor 1-alpha, before also catalyzing the mono- and dimethylation of 'Lys-3'. The polypeptide is Protein N-terminal and lysine N-methyltransferase efm7 (Aspergillus fumigatus (strain ATCC MYA-4609 / CBS 101355 / FGSC A1100 / Af293) (Neosartorya fumigata)).